The sequence spans 888 residues: G-protein coupled receptor family C group 6 member A (888 aa).

Residues 1 to 15 form the signal peptide; the sequence is MALLMTCFVIVFAAS. Residues 16–568 lie on the Extracellular side of the membrane; the sequence is QPCQTPDDLV…KEMEYLDSLA (553 aa). 4 N-linked (GlcNAc...) asparagine glycosylation sites follow: Asn-251, Asn-322, Asn-532, and Asn-544. The helical transmembrane segment at 569–589 threads the bilayer; the sequence is ILLLALSLLGILFVLAIGIIF. Topologically, residues 590–604 are cytoplasmic; the sequence is TRNLNTPVVKSSGEL. Residues 605–625 traverse the membrane as a helical segment; the sequence is MVRYVILFCHFLNFAGTGFFI. Residues 626 to 641 are Extracellular-facing; the sequence is REPQSFTCKTRQTLIC. The helical transmembrane segment at 642 to 662 threads the bilayer; the sequence is MSFTLCISYILMKSLKILLAF. Over 663–676 the chain is Cytoplasmic; it reads SSKLQNFLKCFYKP. The helical transmembrane segment at 677-697 threads the bilayer; that stretch reads IPIIFTCTGIVVVCTLLIFAA. Residues 698-718 are Extracellular-facing; the sequence is PAVGQNVSLPRVIIFECEEGS. A helical transmembrane segment spans residues 719-739; that stretch reads ILAFGSMLGYAAILAFMCFIC. Residues 740-754 lie on the Cytoplasmic side of the membrane; that stretch reads AFKGRKFPENYNEAK. The helical transmembrane segment at 755–775 threads the bilayer; the sequence is FITFGMLIYFIAWITFIPIYT. At 776–779 the chain is on the extracellular side; that stretch reads FGKY. The chain crosses the membrane as a helical span at residues 780-800; sequence MLVVEIIIILISNYGICCMFF. Residues 801 to 888 lie on the Cytoplasmic side of the membrane; the sequence is PKCYVILSKQ…ALPPKRISSI (88 aa).

Belongs to the G-protein coupled receptor 3 family. In terms of assembly, homodimer; disulfide-linked.

The protein resides in the cell membrane. Its function is as follows. Receptor activated by multiple ligands, including osteocalcin (BGLAP), basic amino acids, and various cations. Activated by amino acids with a preference for basic amino acids such as L-Lys, L-Arg and L-ornithine but also by small and polar amino acids. The L-alpha amino acids respond is augmented by divalent cations Ca(2+) and Mg(2+). Seems to act through a G(q)/G(11) and G(i)-coupled pathway. Regulates testosterone production by acting as a ligand for uncarboxylated osteocalcin hormone: osteocalcin-binding at the surface of Leydig cells initiates a signaling response that promotes the expression of enzymes required for testosterone synthesis in a CREB-dependent manner. Mediates the non-genomic effects of androgens in multiple tissue. May coordinate nutritional and hormonal anabolic signals through the sensing of extracellular amino acids, osteocalcin, divalent ions and its responsiveness to anabolic steroids. The polypeptide is G-protein coupled receptor family C group 6 member A (GPRC6A) (Bos taurus (Bovine)).